The sequence spans 157 residues: 2-C-methyl-D-erythritol 2,4-cyclodiphosphate synthase (157 aa).

Residues Asp8 and His10 each coordinate a divalent metal cation. 4-CDP-2-C-methyl-D-erythritol 2-phosphate-binding positions include 8–10 (DVH) and 34–35 (HS). A divalent metal cation is bound at residue His42. 4-CDP-2-C-methyl-D-erythritol 2-phosphate contacts are provided by residues 56–58 (DIG), 61–65 (FPDTD), 100–106 (AQAPKMA), 132–135 (TTTE), Phe139, and Arg142.

It belongs to the IspF family. As to quaternary structure, homotrimer. It depends on a divalent metal cation as a cofactor.

The catalysed reaction is 4-CDP-2-C-methyl-D-erythritol 2-phosphate = 2-C-methyl-D-erythritol 2,4-cyclic diphosphate + CMP. Its pathway is isoprenoid biosynthesis; isopentenyl diphosphate biosynthesis via DXP pathway; isopentenyl diphosphate from 1-deoxy-D-xylulose 5-phosphate: step 4/6. Functionally, involved in the biosynthesis of isopentenyl diphosphate (IPP) and dimethylallyl diphosphate (DMAPP), two major building blocks of isoprenoid compounds. Catalyzes the conversion of 4-diphosphocytidyl-2-C-methyl-D-erythritol 2-phosphate (CDP-ME2P) to 2-C-methyl-D-erythritol 2,4-cyclodiphosphate (ME-CPP) with a corresponding release of cytidine 5-monophosphate (CMP). The chain is 2-C-methyl-D-erythritol 2,4-cyclodiphosphate synthase from Pseudomonas putida (strain ATCC 700007 / DSM 6899 / JCM 31910 / BCRC 17059 / LMG 24140 / F1).